Reading from the N-terminus, the 291-residue chain is Diaminopimelate epimerase (291 aa).

The substrate site is built by asparagine 13, glutamine 46, and asparagine 66. Cysteine 75 (proton donor) is an active-site residue. Residues 76-77 (GN), asparagine 170, asparagine 203, and 221-222 (ER) each bind substrate. The Proton acceptor role is filled by cysteine 230. 231–232 (GS) is a substrate binding site.

Belongs to the diaminopimelate epimerase family. In terms of assembly, homodimer.

The protein resides in the cytoplasm. It carries out the reaction (2S,6S)-2,6-diaminopimelate = meso-2,6-diaminopimelate. The protein operates within amino-acid biosynthesis; L-lysine biosynthesis via DAP pathway; DL-2,6-diaminopimelate from LL-2,6-diaminopimelate: step 1/1. In terms of biological role, catalyzes the stereoinversion of LL-2,6-diaminopimelate (L,L-DAP) to meso-diaminopimelate (meso-DAP), a precursor of L-lysine and an essential component of the bacterial peptidoglycan. The polypeptide is Diaminopimelate epimerase (Albidiferax ferrireducens (strain ATCC BAA-621 / DSM 15236 / T118) (Rhodoferax ferrireducens)).